The primary structure comprises 318 residues: Olfactory receptor 2T34 (318 aa).

At 1–30 (MCSGNQTSQNQTASTDFTLTGLFAESKHAA) the chain is on the extracellular side. Asparagine 5 and asparagine 10 each carry an N-linked (GlcNAc...) asparagine glycan. A helical transmembrane segment spans residues 31 to 54 (LLYTVTFLLFLMALTGNALLILLI). Residues 55–62 (HSEPRLHT) lie on the Cytoplasmic side of the membrane. A helical membrane pass occupies residues 63-84 (PMYFFISQLALMDLMYLCVTVP). At 85–105 (KMLVGQVTGDDTISPSGCGIQ) the chain is on the extracellular side. A disulfide bond links cysteine 102 and cysteine 194. The chain crosses the membrane as a helical span at residues 106–125 (MFFHLTLAGAEVFLLAAMAY). Topologically, residues 126-144 (DRYAAVCRPLHYPLLMNQR) are cytoplasmic. Residues 145 to 163 (VCQLLVSACWVLGMVDGLL) form a helical membrane-spanning segment. Residues 164–200 (LTPITMSFPFCQSRKILSFFCETPALLKLSCSDVSLY) are Extracellular-facing. Residues 201–224 (KMLTYLCCILMLLTPIMVISSSYT) form a helical membrane-spanning segment. The Cytoplasmic segment spans residues 225–241 (LILHLIHRMNSAAGRRK). Residues 242–264 (ALATCSSHMIIVLLLFGASFYTY) traverse the membrane as a helical segment. Residues 265–277 (MLRSSYHTAEQDM) lie on the Extracellular side of the membrane. Residues 278-297 (MVSAFYTIFTPVLNPLIYSL) form a helical membrane-spanning segment. Topologically, residues 298-318 (RNKDVTRALRSMMQSRMNQEK) are cytoplasmic.

The protein belongs to the G-protein coupled receptor 1 family.

The protein localises to the cell membrane. Odorant receptor. This Homo sapiens (Human) protein is Olfactory receptor 2T34 (OR2T34).